We begin with the raw amino-acid sequence, 386 residues long: Uroporphyrinogen decarboxylase (386 aa).

Coproporphyrinogen I-binding residues include arginine 44, alanine 46, arginine 48, arginine 57, aspartate 93, tyrosine 170, serine 225, and histidine 364. Coproporphyrinogen III contacts are provided by arginine 44, alanine 46, and arginine 48. The coproporphyrinogen III site is built by aspartate 93, tyrosine 170, serine 225, and histidine 364.

The protein belongs to the uroporphyrinogen decarboxylase family. Homodimer.

It is found in the cytoplasm. Its subcellular location is the cytosol. It catalyses the reaction uroporphyrinogen III + 4 H(+) = coproporphyrinogen III + 4 CO2. Its pathway is porphyrin-containing compound metabolism; protoporphyrin-IX biosynthesis; coproporphyrinogen-III from 5-aminolevulinate: step 4/4. In terms of biological role, catalyzes the decarboxylation of four acetate groups of uroporphyrinogen-III to yield coproporphyrinogen-III. The polypeptide is Uroporphyrinogen decarboxylase (Drosophila virilis (Fruit fly)).